The sequence spans 238 residues: Ribose-5-phosphate isomerase A (238 aa).

Substrate contacts are provided by residues 30 to 33 (SGST), 87 to 90 (DGAD), and 100 to 103 (KGGG). Glu109 serves as the catalytic Proton acceptor. A substrate-binding site is contributed by Lys127.

It belongs to the ribose 5-phosphate isomerase family. As to quaternary structure, homodimer.

It catalyses the reaction aldehydo-D-ribose 5-phosphate = D-ribulose 5-phosphate. Its pathway is carbohydrate degradation; pentose phosphate pathway; D-ribose 5-phosphate from D-ribulose 5-phosphate (non-oxidative stage): step 1/1. Catalyzes the reversible conversion of ribose-5-phosphate to ribulose 5-phosphate. This is Ribose-5-phosphate isomerase A from Synechococcus sp. (strain CC9311).